The primary structure comprises 274 residues: MAIHLYKTSTPSTRNGAVDSQVKSNPRNHLIYGQHRCGKGRNARGIITAGHRGGGHKRLYRQIDFRRNEKNIYGRIVTIEYDPNRNASICLIHYGDGEKKYILHPRGAIIGDTIVSGTEVPIKMGNALPLTDMPLGTAIHNIEITLGKGGQLARAAGAVAKLIAKEGKSATLKLPSGEVRLISKNCSATVGQVGNVGVNQKNLGRAGSKCWLGKRPIVRGVVMNPVDHPHGGGEGRAPIGRKKPATPWGFPALGRRSRKRKKYSDNLILRRRTK.

Disordered regions lie at residues 1–22 and 223–274; these read MAIH…DSQV and MNPV…RRTK.

It belongs to the universal ribosomal protein uL2 family. In terms of assembly, part of the 50S ribosomal subunit.

Its subcellular location is the plastid. It is found in the chloroplast. In Phaseolus vulgaris (Kidney bean), this protein is Large ribosomal subunit protein uL2cz/uL2cy (rpl2-A).